The sequence spans 1954 residues: Chromodomain-helicase-DNA-binding protein 5 (1954 aa).

Disordered stretches follow at residues 1–134 (MRGP…PKSS) and 225–338 (PLAV…GDGY). Acidic residues-rich tracts occupy residues 17 to 37 (EEME…EAFD) and 72 to 90 (NDEL…ESEG). Basic residues predominate over residues 96–115 (NKKKKKKLKDKKEKKAKRKK). A compositionally biased stretch (pro residues) spans 227–237 (AVSPPQVPQPV). A compositionally biased stretch (basic residues) spans 251 to 272 (GVRKKIKGSKDGKKKGKGKKTA). Residues 291-301 (SEEDEREESDF) show a composition bias toward acidic residues. Over residues 321 to 330 (KKSKRRRKKK) the composition is skewed to basic residues. 2 consecutive PHD-type zinc fingers follow at residues 343 to 390 (QDYC…CEKE) and 416 to 463 (MEFC…CTCP). Positions 343–653 (QDYCEVCQQG…HRELMLGEDT (311 aa)) are histone-binding. The Chromo 1 domain maps to 497–554 (LPPPKPLEGIPEREFFVKWAGLSYWHCSWVKELQLELYHTVMYRNYQRKNDMDEPPPF). Positions 549-571 (DEPPPFDYGSGDEDGKSEKRKNK) are disordered. The segment covering 561–571 (EDGKSEKRKNK) has biased composition (basic and acidic residues). The Chromo 2 domain occupies 592-653 (MMIHRILNHS…HRELMLGEDT (62 aa)). The Helicase ATP-binding domain occupies 712–896 (RFSWAQGTDT…FHLLNFLTPE (185 aa)). 725 to 732 (DEMGLGKT) lines the ATP pocket. Positions 847–850 (DEAH) match the DEAH box motif. The Helicase C-terminal domain occupies 1028–1193 (LLQKMLKKLR…MTKQELDDIL (166 aa)). Disordered stretches follow at residues 1209-1253 (MSQG…EDSS), 1351-1411 (YNDA…LPPL), 1524-1564 (YSTP…APLG), 1597-1640 (AALD…REEV), and 1658-1696 (SRGD…KKED). Composition is skewed to acidic residues over residues 1355–1366 (SQEDQEWQDELS) and 1376–1385 (SEDEDEDFEE). Gln1390 carries the N5-methylglutamine modification. The residue at position 1554 (Ser1554) is a Phosphoserine. A compositionally biased stretch (low complexity) spans 1554–1564 (SPAHLLPAPLG). 2 stretches are compositionally biased toward basic and acidic residues: residues 1600-1627 (DRVE…ETEK) and 1658-1678 (SRGD…KEPI).

It belongs to the SNF2/RAD54 helicase family. In terms of assembly, component of the nucleosome remodeling and deacetylase (NuRD) repressor complex, composed of core proteins MTA1, MTA2, MTA3, RBBP4, RBBP7, HDAC1, HDAC2, MBD2, MBD3, and peripherally associated proteins CDK2AP1, CDK2AP2, GATAD2A, GATAD2B, CHD3, CHD4 and CHD5. The exact stoichiometry of the NuRD complex is unknown, and some subunits such as MBD2 and MBD3, GATAD2A and GATAD2B, and CHD3, CHD4 and CHD5 define mutually exclusive NuRD complexes. Interacts with HDAC2. In terms of processing, methylated at Gln-1390 by N6AMT1. As to expression, preferentially expressed in total brain, fetal brain, and cerebellum. It is also moderately expressed in the adrenal gland and detected in testis.

It localises to the nucleus. The protein resides in the chromosome. The catalysed reaction is ATP + H2O = ADP + phosphate + H(+). ATP-dependent chromatin-remodeling factor that binds DNA through histones and regulates gene transcription. May specifically recognize and bind trimethylated 'Lys-27' (H3K27me3) and non-methylated 'Lys-4' of histone H3. Acts as a component of the histone deacetylase NuRD complex which participates in the remodeling of chromatin. Plays a role in the development of the nervous system by activating the expression of genes promoting neuron terminal differentiation. In parallel, it may also positively regulate the trimethylation of histone H3 at 'Lys-27' thereby specifically repressing genes that promote the differentiation into non-neuronal cell lineages. Regulates the expression of genes involved in cell proliferation and differentiation. Downstream activated genes may include CDKN2A that positively regulates the p53/TP53 pathway, which in turn, prevents cell proliferation. In spermatogenesis, it probably regulates histone hyperacetylation and the replacement of histones by transition proteins in chromatin, a crucial step in the condensation of spermatid chromatin and the production of functional spermatozoa. This chain is Chromodomain-helicase-DNA-binding protein 5, found in Homo sapiens (Human).